A 396-amino-acid polypeptide reads, in one-letter code: Methionine import ATP-binding protein MetN 2 (396 aa).

One can recognise an ABC transporter domain in the interval 41–280 (VSFELVGKVF…PRHGATRALL (240 aa)). ATP is bound at residue 77–84 (GRSGAGKS).

Belongs to the ABC transporter superfamily. Methionine importer (TC 3.A.1.24) family. As to quaternary structure, the complex is composed of two ATP-binding proteins (MetN), two transmembrane proteins (MetI) and a solute-binding protein (MetQ).

The protein resides in the cell inner membrane. The enzyme catalyses L-methionine(out) + ATP + H2O = L-methionine(in) + ADP + phosphate + H(+). The catalysed reaction is D-methionine(out) + ATP + H2O = D-methionine(in) + ADP + phosphate + H(+). Its function is as follows. Part of the ABC transporter complex MetNIQ involved in methionine import. Responsible for energy coupling to the transport system. This Burkholderia pseudomallei (strain 1710b) protein is Methionine import ATP-binding protein MetN 2.